Consider the following 308-residue polypeptide: Methionyl-tRNA formyltransferase (308 aa).

109 to 112 contributes to the (6S)-5,6,7,8-tetrahydrofolate binding site; the sequence is SLLP.

The protein belongs to the Fmt family.

The catalysed reaction is L-methionyl-tRNA(fMet) + (6R)-10-formyltetrahydrofolate = N-formyl-L-methionyl-tRNA(fMet) + (6S)-5,6,7,8-tetrahydrofolate + H(+). Functionally, attaches a formyl group to the free amino group of methionyl-tRNA(fMet). The formyl group appears to play a dual role in the initiator identity of N-formylmethionyl-tRNA by promoting its recognition by IF2 and preventing the misappropriation of this tRNA by the elongation apparatus. The protein is Methionyl-tRNA formyltransferase of Clostridium beijerinckii (strain ATCC 51743 / NCIMB 8052) (Clostridium acetobutylicum).